We begin with the raw amino-acid sequence, 122 residues long: ATP synthase epsilon chain (122 aa).

This sequence belongs to the ATPase epsilon chain family. F-type ATPases have 2 components, CF(1) - the catalytic core - and CF(0) - the membrane proton channel. CF(1) has five subunits: alpha(3), beta(3), gamma(1), delta(1), epsilon(1). CF(0) has three main subunits: a, b and c.

It is found in the cell membrane. Produces ATP from ADP in the presence of a proton gradient across the membrane. The sequence is that of ATP synthase epsilon chain from Rhodococcus jostii (strain RHA1).